The sequence spans 354 residues: Probable alcohol acetyltransferase (354 aa).

Residues Ser-124 and His-293 each act as charge relay system in the active site.

It belongs to the AB hydrolase superfamily.

Functionally, probable alcohol acetyltransferase that uses acetyl-CoA to synthesize acetate esters from various alcohols. Not involved in the synthesis of ethyl acetate. This Cyberlindnera jadinii (strain ATCC 18201 / CBS 1600 / BCRC 20928 / JCM 3617 / NBRC 0987 / NRRL Y-1542) (Torula yeast) protein is Probable alcohol acetyltransferase (EAT2).